A 627-amino-acid polypeptide reads, in one-letter code: (-)-alpha-pinene synthase 1, chloroplastic (627 aa).

The transit peptide at 1–36 (MALVSIAPLASKSCLHKSLSSSAHELKTICRTIPTL) directs the protein to the chloroplast. Mg(2+) contacts are provided by Asp378, Asp382, and Asp530. The DDXXD motif motif lies at 378-382 (DDMYD).

This sequence belongs to the terpene synthase family. Tpsd subfamily. Mg(2+) is required as a cofactor. It depends on Mn(2+) as a cofactor.

Its subcellular location is the plastid. It is found in the chloroplast. It catalyses the reaction (2E)-geranyl diphosphate = (1S,5S)-beta-pinene + diphosphate. The catalysed reaction is (2E)-geranyl diphosphate = (1S,5S)-alpha-pinene + diphosphate. The protein operates within terpene metabolism; oleoresin biosynthesis. In terms of biological role, terpene synthase (TPS) involved in the biosynthesis of monoterpene natural products included in conifer oleoresin secretions and volatile emissions; these compounds contribute to biotic and abiotic stress defense against herbivores and pathogens. Catalyzes the conversion of (2E)-geranyl diphosphate (GPP) to (1S,5S)-beta-pinene. The chain is (-)-alpha-pinene synthase 1, chloroplastic from Picea sitchensis (Sitka spruce).